The chain runs to 609 residues: MQINLLNDFIKAYENTYSVSFDDSFKGRIQELCKELNEPFMHASYALENELKELVFSLDKNVNIAIIGQFSSGKSSLLNLILGRDCLPTGVVPVTFKPTFLRYAKEYFLRVEFEDGSDIITNIEKLAFYTDQRNEVKQAKSLHIFAPIPLLEKITLVDTPGLNANENDTLTTLDELKNIHGAIWLSLIDNAGKKSEEDAIKANLELLGENSICVLNQKDKLSAEELDNVLNYAKSVFLKYFNELIAISCKEAKDEQSYEKSNFQSLLDFLTQLDTTVLKEKFVKRKILNLCEILEDENQLFVGIFDRLLNQFQSYEKHLLLAYENFLKEIEILNHQILEQLKSISERISSEIFASVKEKDAYFYKESKGFLKKDLYTRYDYKAPYISSDDAFLAMFYNSDVMSKEFKKIKNELYKSFEEIKMKLKDFINILEREILLFKAEFSNIQKDHIFQSDKNFSELRAFCNASDEYFLKDFKELLFKSILELDLFFEKLNLKAFTNYENATKLSLAFFSRKINESRVLYELDSSEFVLFYPKKSEIYERVLNELNVYEFETLLINKPILTKIAKNFLEQSQNLIQEKNKFLDLKKAELQKRRAQILNVRESIKED.

The interval 1–16 (MQINLLNDFIKAYENT) is inserts into assembly domain of DLP1, required for tetramerization. A linker region spans residues 17-25 (YSVSFDDSF). The Dynamin-type G domain maps to 63-310 (NIAIIGQFSS…FVGIFDRLLN (248 aa)). The tract at residues 68–75 (GQFSSGKS) is G1 motif. 72–76 (SGKSS) is a binding site for GDP. Residues 93–95 (PVT) are G2 motif. A G3 motif region spans residues 158–161 (DTPG). The tract at residues 216–219 (NQKD) is G4 motif.

Belongs to the TRAFAC class dynamin-like GTPase superfamily. Dynamin/Fzo/YdjA family. In terms of assembly, forms a 2:2 heterotetramer with DLP1. DLP2 forms a central back-to-back dimer flanked on each side by a DLP1 subunit. In the crystal structures the 2 DLP1 subunits are in very different conformations.

It is found in the cytoplasm. Its subcellular location is the cytosol. It carries out the reaction GTP + H2O = GDP + phosphate + H(+). Functionally, the heterotetrameric DLP1(2)-DLP2(2) complex tethers liposomes and may mediate their fusion. Initial binding is probably mediated by DLP1, while DLP2 couples DLP1 subunits and increases the effective reach of the complex up to 45 nm. The role of the nucleotide is unknown. This subunit alone very weakly binds to liposomes; GTP, GDP, GMPPCP and GMPPNP do not change heterotetramer binding. Tetramerization is required for GTPase activity, suggesting the GTPase domains (dynamin-type G) from DLP1 and DLP2 must dimerize to reconstitute the GTPase active site. The polypeptide is Dynamin-like protein 2 (Campylobacter jejuni subsp. jejuni serotype O:23/36 (strain 81-176)).